Here is a 773-residue protein sequence, read N- to C-terminus: uncharacterized protein (773 aa).

The disordered stretch occupies residues 192–219 (EASGTNNNPKEIEMNSDTTSSVPKSGST).

The protein resides in the cytoplasm. This is an uncharacterized protein from Schizosaccharomyces pombe (strain 972 / ATCC 24843) (Fission yeast).